A 235-amino-acid chain; its full sequence is Sugar fermentation stimulation protein homolog (235 aa).

It belongs to the SfsA family.

The chain is Sugar fermentation stimulation protein homolog from Serratia proteamaculans (strain 568).